A 127-amino-acid polypeptide reads, in one-letter code: Gonadotropin subunit beta-1 (127 aa).

The first 22 residues, 1–22 (MHLAVTALCLTLAPVLARASTS), serve as a signal peptide directing secretion. 6 cysteine pairs are disulfide-bonded: cysteine 23–cysteine 71, cysteine 37–cysteine 86, cysteine 40–cysteine 124, cysteine 48–cysteine 102, cysteine 52–cysteine 104, and cysteine 107–cysteine 114. N-linked (GlcNAc...) asparagine glycans are attached at residues asparagine 27 and asparagine 44.

It belongs to the glycoprotein hormones subunit beta family. As to quaternary structure, heterodimer of an alpha and a beta chain.

Its subcellular location is the secreted. Its function is as follows. Involved in gametogenesis and steroidogenesis. This is Gonadotropin subunit beta-1 (cgba) from Anguilla japonica (Japanese eel).